The following is a 278-amino-acid chain: Adenosylcobinamide-GDP ribazoletransferase (278 aa).

The next 6 helical transmembrane spans lie at 44–64 (GIGVVVGGAAAAMFALLQLLL), 69–89 (FTPLVAAAFSTVATVWLTGGF), 121–141 (AFGAMALVLALLCKVALLALL), 161–181 (VCAALWTGHIVSRGLPLVMIW), 204–224 (GGLAIAFSWCFGALALASLAL), and 227–247 (INLIVACGFSVLALLGLLRFF).

This sequence belongs to the CobS family. Mg(2+) serves as cofactor.

The protein localises to the cell inner membrane. The catalysed reaction is alpha-ribazole + adenosylcob(III)inamide-GDP = adenosylcob(III)alamin + GMP + H(+). The enzyme catalyses alpha-ribazole 5'-phosphate + adenosylcob(III)inamide-GDP = adenosylcob(III)alamin 5'-phosphate + GMP + H(+). The protein operates within cofactor biosynthesis; adenosylcobalamin biosynthesis; adenosylcobalamin from cob(II)yrinate a,c-diamide: step 7/7. Its function is as follows. Joins adenosylcobinamide-GDP and alpha-ribazole to generate adenosylcobalamin (Ado-cobalamin). Also synthesizes adenosylcobalamin 5'-phosphate from adenosylcobinamide-GDP and alpha-ribazole 5'-phosphate. The polypeptide is Adenosylcobinamide-GDP ribazoletransferase (Polaromonas naphthalenivorans (strain CJ2)).